We begin with the raw amino-acid sequence, 322 residues long: Transaldolase (322 aa).

Lysine 136 serves as the catalytic Schiff-base intermediate with substrate.

This sequence belongs to the transaldolase family. Type 1 subfamily. In terms of assembly, homodimer.

It localises to the cytoplasm. It catalyses the reaction D-sedoheptulose 7-phosphate + D-glyceraldehyde 3-phosphate = D-erythrose 4-phosphate + beta-D-fructose 6-phosphate. It functions in the pathway carbohydrate degradation; pentose phosphate pathway; D-glyceraldehyde 3-phosphate and beta-D-fructose 6-phosphate from D-ribose 5-phosphate and D-xylulose 5-phosphate (non-oxidative stage): step 2/3. Functionally, transaldolase is important for the balance of metabolites in the pentose-phosphate pathway. This chain is Transaldolase, found in Xanthomonas oryzae pv. oryzae (strain PXO99A).